We begin with the raw amino-acid sequence, 480 residues long: V-type ATP synthase beta chain 2 (480 aa).

Belongs to the ATPase alpha/beta chains family.

Produces ATP from ADP in the presence of a proton gradient across the membrane. The V-type beta chain is a regulatory subunit. This chain is V-type ATP synthase beta chain 2 (atpB2), found in Treponema pallidum (strain Nichols).